Consider the following 109-residue polypeptide: Aquaporin-2 (109 aa).

The Cytoplasmic segment spans residues 1–6; the sequence is SIAFSR. The chain crosses the membrane as a helical span at residues 7 to 27; it reads AVFAEFLATLLFVFFGLGSAL. Over 28-35 the chain is Extracellular; that stretch reads NWPSALPS. Residues 36–54 traverse the membrane as a helical segment; that stretch reads TLQIAMAFGLGIGTLVQAL. Residues 55–59 lie on the Cytoplasmic side of the membrane; that stretch reads GHVSG. The segment at residues 60-69 is an intramembrane region (discontinuously helical); that stretch reads AHINPAVTVA. The NPA 1 motif lies at 63 to 65; it reads NPA. Topologically, residues 70-80 are cytoplasmic; that stretch reads CLVGCHVSFLR. The helical transmembrane segment at 81–102 threads the bilayer; that stretch reads AAFYVAAQLLGAVAGAALLHEI. Residues 103 to 109 lie on the Extracellular side of the membrane; sequence TPAEVRG.

It belongs to the MIP/aquaporin (TC 1.A.8) family. Homotetramer. Serine phosphorylation is necessary and sufficient for expression at the apical membrane. Endocytosis is not phosphorylation-dependent. In terms of processing, N-glycosylated.

It is found in the apical cell membrane. The protein resides in the basolateral cell membrane. Its subcellular location is the cell membrane. The protein localises to the cytoplasmic vesicle membrane. It localises to the golgi apparatus. It is found in the trans-Golgi network membrane. The catalysed reaction is H2O(in) = H2O(out). The enzyme catalyses glycerol(in) = glycerol(out). Its function is as follows. Forms a water-specific channel that provides the plasma membranes of renal collecting duct with high permeability to water, thereby permitting water to move in the direction of an osmotic gradient. Plays an essential role in renal water homeostasis. Could also be permeable to glycerol. The polypeptide is Aquaporin-2 (Oryctolagus cuniculus (Rabbit)).